We begin with the raw amino-acid sequence, 358 residues long: Alanine racemase (358 aa).

Lysine 35 acts as the Proton acceptor; specific for D-alanine in catalysis. Lysine 35 is subject to N6-(pyridoxal phosphate)lysine. Position 130 (arginine 130) interacts with substrate. The Proton acceptor; specific for L-alanine role is filled by tyrosine 255. Methionine 303 is a binding site for substrate.

Belongs to the alanine racemase family. Pyridoxal 5'-phosphate is required as a cofactor.

The catalysed reaction is L-alanine = D-alanine. The protein operates within amino-acid biosynthesis; D-alanine biosynthesis; D-alanine from L-alanine: step 1/1. Functionally, catalyzes the interconversion of L-alanine and D-alanine. May also act on other amino acids. The sequence is that of Alanine racemase (alr) from Shewanella oneidensis (strain ATCC 700550 / JCM 31522 / CIP 106686 / LMG 19005 / NCIMB 14063 / MR-1).